Consider the following 430-residue polypeptide: Ribosomal protein uS12 methylthiotransferase RimO (430 aa).

One can recognise an MTTase N-terminal domain in the interval 1–116 (MRVGIKVLGC…IANAIENGTD (116 aa)). [4Fe-4S] cluster-binding residues include cysteine 10, cysteine 46, cysteine 79, cysteine 148, cysteine 152, and cysteine 155. The region spanning 134–365 (LEERPYAYVK…LLQAEISNSR (232 aa)) is the Radical SAM core domain. A TRAM domain is found at 367 to 430 (DRFVGKKLKF…DEYDMWGSVI (64 aa)).

Belongs to the methylthiotransferase family. RimO subfamily. In terms of assembly, monomer. [4Fe-4S] cluster serves as cofactor.

The protein localises to the cytoplasm. It carries out the reaction L-aspartate(89)-[ribosomal protein uS12]-hydrogen + (sulfur carrier)-SH + AH2 + 2 S-adenosyl-L-methionine = 3-methylsulfanyl-L-aspartate(89)-[ribosomal protein uS12]-hydrogen + (sulfur carrier)-H + 5'-deoxyadenosine + L-methionine + A + S-adenosyl-L-homocysteine + 2 H(+). Functionally, catalyzes the methylthiolation of an aspartic acid residue of ribosomal protein uS12. This chain is Ribosomal protein uS12 methylthiotransferase RimO, found in Thermotoga maritima (strain ATCC 43589 / DSM 3109 / JCM 10099 / NBRC 100826 / MSB8).